The chain runs to 438 residues: Protein DJ-1 homolog B (438 aa).

A chloroplast-targeting transit peptide spans 1 to 45 (MASSSLCHRYFNKITVTPFFNTKKLHHYSPRRISLRVNRRSFSIS). 2 PfpI endopeptidase domains span residues 53–220 (KKVL…EQLL) and 258–424 (PQIL…EKFY).

It belongs to the peptidase C56 family. Homodimer.

The protein localises to the plastid. Its subcellular location is the chloroplast. Its function is as follows. May be involved in oxidative stress response. In Arabidopsis thaliana (Mouse-ear cress), this protein is Protein DJ-1 homolog B (DJ1B).